Consider the following 200-residue polypeptide: Large ribosomal subunit protein uL4 (200 aa).

A disordered region spans residues arginine 43–aspartate 71.

It belongs to the universal ribosomal protein uL4 family. Part of the 50S ribosomal subunit.

Functionally, one of the primary rRNA binding proteins, this protein initially binds near the 5'-end of the 23S rRNA. It is important during the early stages of 50S assembly. It makes multiple contacts with different domains of the 23S rRNA in the assembled 50S subunit and ribosome. In terms of biological role, forms part of the polypeptide exit tunnel. The polypeptide is Large ribosomal subunit protein uL4 (Actinobacillus pleuropneumoniae serotype 5b (strain L20)).